The sequence spans 294 residues: Phenylalanine-4-hydroxylase (294 aa).

Residues 1-20 (MSGDGLSNGPPPGARPDWTI) are disordered. Fe cation is bound by residues H129, H134, and E175.

The protein belongs to the biopterin-dependent aromatic amino acid hydroxylase family. The cofactor is Fe(2+).

It carries out the reaction (6R)-L-erythro-5,6,7,8-tetrahydrobiopterin + L-phenylalanine + O2 = (4aS,6R)-4a-hydroxy-L-erythro-5,6,7,8-tetrahydrobiopterin + L-tyrosine. It participates in amino-acid degradation; L-phenylalanine degradation; acetoacetate and fumarate from L-phenylalanine: step 1/6. In Caulobacter vibrioides (strain ATCC 19089 / CIP 103742 / CB 15) (Caulobacter crescentus), this protein is Phenylalanine-4-hydroxylase (phhA).